The chain runs to 273 residues: Phosphate import ATP-binding protein PstB (273 aa).

Positions 18–257 (ISLQNVTISY…EFDKTKKIFN (240 aa)) constitute an ABC transporter domain. An ATP-binding site is contributed by 50–57 (GPSGCGKS).

The protein belongs to the ABC transporter superfamily. Phosphate importer (TC 3.A.1.7) family. As to quaternary structure, the complex is composed of two ATP-binding proteins (PstB), two transmembrane proteins (PstC and PstA) and a solute-binding protein (PstS).

It is found in the cell inner membrane. It carries out the reaction phosphate(out) + ATP + H2O = ADP + 2 phosphate(in) + H(+). Functionally, part of the ABC transporter complex PstSACB involved in phosphate import. Responsible for energy coupling to the transport system. This Prochlorococcus marinus (strain SARG / CCMP1375 / SS120) protein is Phosphate import ATP-binding protein PstB.